Here is an 861-residue protein sequence, read N- to C-terminus: Bifunctional uridylyltransferase/uridylyl-removing enzyme (861 aa).

The segment at 1-322 (MHTAAAATPA…FPTELGITRT (322 aa)) is uridylyltransferase. Positions 323 to 679 (INGRFVERQG…ARISPVGEGL (357 aa)) are uridylyl-removing. The region spanning 441–557 (VDQHILMVVR…RHFADQVGSE (117 aa)) is the HD domain. 2 consecutive ACT domains span residues 680 to 763 (QVAV…AEPP) and 792 to 861 (LLSL…ALAI).

Belongs to the GlnD family. Mg(2+) is required as a cofactor.

It carries out the reaction [protein-PII]-L-tyrosine + UTP = [protein-PII]-uridylyl-L-tyrosine + diphosphate. It catalyses the reaction [protein-PII]-uridylyl-L-tyrosine + H2O = [protein-PII]-L-tyrosine + UMP + H(+). With respect to regulation, uridylyltransferase (UTase) activity is inhibited by glutamine, while glutamine activates uridylyl-removing (UR) activity. Modifies, by uridylylation and deuridylylation, the PII regulatory proteins (GlnB and homologs), in response to the nitrogen status of the cell that GlnD senses through the glutamine level. Under low glutamine levels, catalyzes the conversion of the PII proteins and UTP to PII-UMP and PPi, while under higher glutamine levels, GlnD hydrolyzes PII-UMP to PII and UMP (deuridylylation). Thus, controls uridylylation state and activity of the PII proteins, and plays an important role in the regulation of nitrogen assimilation and metabolism. This is Bifunctional uridylyltransferase/uridylyl-removing enzyme from Ralstonia nicotianae (strain ATCC BAA-1114 / GMI1000) (Ralstonia solanacearum).